Reading from the N-terminus, the 354-residue chain is MDFQGSVPTYSYDIDYGMSAPCQKINVKQIAAQLLPPLYSLVFIFGFVGNMMVFLILISCKKLKSVTDIYLLNLAISDLLFLLTLPFWAHYAANEWVFGNIMCKVFTGLYHIGYFGGIFFIILLTIDRYLAIVHAVFALKVRTVNFGVITSVVTWAVAVFASLPEIIFTRSQKEGFHYTCSPHFPHTQYHFWKSFQTLKMVILSLILPLLVMVICYSGILHTLFRCRNEKKRHRAVRLIFAIMIVYFLFWTPYNIVLLLTTFQEFFGLNNCSSSNRLDQAMQATETLGMTHCCLNPVIYAFVGEKFRSYLSVFFRKHMVKRFCKRCSIFQQDNPDRASSVYTRSTGEHEVSTGL.

Residues 1-32 (MDFQGSVPTYSYDIDYGMSAPCQKINVKQIAA) lie on the Extracellular side of the membrane. O-linked (GalNAc...) serine glycosylation occurs at Ser6. A sulfotyrosine mark is found at Tyr10, Tyr12, and Tyr16. 2 cysteine pairs are disulfide-bonded: Cys22–Cys271 and Cys103–Cys180. The chain crosses the membrane as a helical span at residues 33–60 (QLLPPLYSLVFIFGFVGNMMVFLILISC). The Cytoplasmic portion of the chain corresponds to 61-70 (KKLKSVTDIY). The chain crosses the membrane as a helical span at residues 71 to 91 (LLNLAISDLLFLLTLPFWAHY). Residues 92–104 (AANEWVFGNIMCK) lie on the Extracellular side of the membrane. A helical transmembrane segment spans residues 105-126 (VFTGLYHIGYFGGIFFIILLTI). Residues 127–143 (DRYLAIVHAVFALKVRT) are Cytoplasmic-facing. The helical transmembrane segment at 144-168 (VNFGVITSVVTWAVAVFASLPEIIF) threads the bilayer. Residues 169–200 (TRSQKEGFHYTCSPHFPHTQYHFWKSFQTLKM) are Extracellular-facing. Residues 201-220 (VILSLILPLLVMVICYSGIL) form a helical membrane-spanning segment. Residues 221 to 237 (HTLFRCRNEKKRHRAVR) are Cytoplasmic-facing. A helical membrane pass occupies residues 238–262 (LIFAIMIVYFLFWTPYNIVLLLTTF). The Extracellular segment spans residues 263 to 279 (QEFFGLNNCSSSNRLDQ). A helical transmembrane segment spans residues 280–303 (AMQATETLGMTHCCLNPVIYAFVG). Over 304 to 354 (EKFRSYLSVFFRKHMVKRFCKRCSIFQQDNPDRASSVYTRSTGEHEVSTGL) the chain is Cytoplasmic. 2 S-palmitoyl cysteine lipidation sites follow: Cys323 and Cys326. Phosphoserine; by BARK1 occurs at positions 338, 339, 344, and 351.

This sequence belongs to the G-protein coupled receptor 1 family. Interacts with PRAF2. Efficient ligand binding to CCL3/MIP-1alpha and CCL4/MIP-1beta requires sulfation, O-glycosylation and sialic acid modifications. Glycosylation on Ser-6 is required for efficient binding of CCL4. Interacts with GRK2. Interacts with ARRB1 and ARRB2. Interacts with CNIH4. Interacts with S100A4; this interaction stimulates T-lymphocyte chemotaxis. Post-translationally, sulfated on at least 2 of the N-terminal tyrosines. Sulfation is required for efficient binding of the chemokines, CCL3 and CCL4. In terms of processing, O-glycosylated, but not N-glycosylated. Ser-6 appears to be the major site. Also sialylated glycans present which contribute to chemokine binding. Palmitoylation in the C-terminal is important for cell surface expression. Post-translationally, phosphorylation on serine residues in the C-terminal is stimulated by binding CC chemokines especially by APO-RANTES.

The protein resides in the cell membrane. Receptor for a number of inflammatory CC-chemokines including CCL3/MIP-1-alpha, CCL4/MIP-1-beta and RANTES and subsequently transduces a signal by increasing the intracellular calcium ion level. May play a role in the control of granulocytic lineage proliferation or differentiation. Participates in T-lymphocyte migration to the infection site by acting as a chemotactic receptor. This chain is C-C chemokine receptor type 5 (Ccr5), found in Mus musculus (Mouse).